The primary structure comprises 287 residues: Diphthine methyl ester synthase (287 aa).

S-adenosyl-L-methionine is bound by residues L9, D84, G87, 112–113 (SI), L163, V221, and H248.

It belongs to the diphthine synthase family.

It localises to the cytoplasm. The enzyme catalyses 2-[(3S)-amino-3-carboxypropyl]-L-histidyl-[translation elongation factor 2] + 4 S-adenosyl-L-methionine = diphthine methyl ester-[translation elongation factor 2] + 4 S-adenosyl-L-homocysteine + 3 H(+). The protein operates within protein modification; peptidyl-diphthamide biosynthesis. Its function is as follows. S-adenosyl-L-methionine-dependent methyltransferase that catalyzes four methylations of the modified target histidine residue in translation elongation factor 2 (EF-2), to form an intermediate called diphthine methyl ester. The four successive methylation reactions represent the second step of diphthamide biosynthesis. This chain is Diphthine methyl ester synthase (dph-5), found in Neurospora crassa (strain ATCC 24698 / 74-OR23-1A / CBS 708.71 / DSM 1257 / FGSC 987).